The following is a 490-amino-acid chain: Ribosomal L1 domain-containing protein 1 (490 aa).

An N-acetylmethionine modification is found at Met1. A compositionally biased stretch (low complexity) spans 1–27 (MEDSASASLSSAAATGTSTSTPAAPTA). Positions 1–33 (MEDSASASLSSAAATGTSTSTPAAPTARKQLDK) are disordered. Glycyl lysine isopeptide (Lys-Gly) (interchain with G-Cter in SUMO2) cross-links involve residues Lys120 and Lys254. Basic residues predominate over residues 280–293 (LNKKKKEARRKRRE). Residues 280-313 (LNKKKKEARRKRRERNFEKQKERKKKRQQARKTA) are a coiled coil. A disordered region spans residues 280 to 490 (LNKKKKEARR…PKKPKVPQST (211 aa)). Over residues 329–343 (TVKKPESKKEQTPEH) the composition is skewed to basic and acidic residues. Thr340 bears the Phosphothreonine mark. Residues 344 to 353 (GKKKRGRGKA) show a composition bias toward basic residues. Thr358 is modified (phosphothreonine). Residue Ser361 is modified to Phosphoserine. Thr375 carries the phosphothreonine modification. Positions 376–385 (PANEKVEIQK) are enriched in basic and acidic residues. Lys380 participates in a covalent cross-link: Glycyl lysine isopeptide (Lys-Gly) (interchain with G-Cter in SUMO2). Residues Ser392 and Ser396 each carry the phosphoserine modification. Phosphothreonine is present on residues Thr415 and Thr423. Ser427 is modified (phosphoserine). A compositionally biased stretch (basic and acidic residues) spans 427–460 (SPEKKPKIKEEAVKEKSPSLGKKDARQTPKKPEA). Lys435 participates in a covalent cross-link: Glycyl lysine isopeptide (Lys-Gly) (interchain with G-Cter in SUMO2). Ser443 carries the phosphoserine modification. Lys461 participates in a covalent cross-link: Glycyl lysine isopeptide (Lys-Gly) (interchain with G-Cter in SUMO2). Thr465 is subject to Phosphothreonine. An N6-acetyllysine modification is found at Lys468. Ser469 is subject to Phosphoserine. A compositionally biased stretch (basic residues) spans 469-490 (SVRKASHTPKKWPKKPKVPQST).

Belongs to the universal ribosomal protein uL1 family. Highly divergent. As to quaternary structure, interacts with ING1 (isoform 2). Interacts with KPNA7 and KPNA2. In terms of tissue distribution, expressed at high intensities in the heart, skeletal muscle, and placenta.

It localises to the nucleus. It is found in the nucleolus. Regulates cellular senescence through inhibition of PTEN translation. Acts as a pro-apoptotic regulator in response to DNA damage. In Homo sapiens (Human), this protein is Ribosomal L1 domain-containing protein 1 (RSL1D1).